The chain runs to 807 residues: Glycerol-3-phosphate acyltransferase (807 aa).

The HXXXXD motif signature appears at 308–313 (CHRSHM).

It belongs to the GPAT/DAPAT family.

The protein localises to the cell inner membrane. The enzyme catalyses sn-glycerol 3-phosphate + an acyl-CoA = a 1-acyl-sn-glycero-3-phosphate + CoA. It functions in the pathway phospholipid metabolism; CDP-diacylglycerol biosynthesis; CDP-diacylglycerol from sn-glycerol 3-phosphate: step 1/3. In Shewanella amazonensis (strain ATCC BAA-1098 / SB2B), this protein is Glycerol-3-phosphate acyltransferase.